The chain runs to 355 residues: tRNA (guanine-N(1)-)-methyltransferase (355 aa).

Residues G109 and 129–134 each bind S-adenosyl-L-methionine; that span reads IGDYVL.

This sequence belongs to the RNA methyltransferase TrmD family. Homodimer.

Its subcellular location is the cytoplasm. It carries out the reaction guanosine(37) in tRNA + S-adenosyl-L-methionine = N(1)-methylguanosine(37) in tRNA + S-adenosyl-L-homocysteine + H(+). In terms of biological role, specifically methylates guanosine-37 in various tRNAs. The protein is tRNA (guanine-N(1)-)-methyltransferase of Chlamydia abortus (strain DSM 27085 / S26/3) (Chlamydophila abortus).